We begin with the raw amino-acid sequence, 264 residues long: Agamous-like MADS-box protein AGL15 (264 aa).

One can recognise an MADS-box domain in the interval 3 to 57; sequence RGKIEIKRIENANSRQVTFSKRRAGLLKKAHELSVLCDAEVAVIVFSKSGKLFEF. Residues 87–177 enclose the K-box domain; it reads NQEECTEVDL…RRQVQELRSF (91 aa). Residues 223 to 264 are disordered; sequence LQLGLPGEAHDTRKNEGDRESPSSDSVTTSTTRATAQRISLV. Basic and acidic residues predominate over residues 230–244; sequence EAHDTRKNEGDRESP. The segment covering 245-257 has biased composition (low complexity); the sequence is SSDSVTTSTTRAT.

The protein resides in the nucleus. Its function is as follows. Probable transcription factor. The sequence is that of Agamous-like MADS-box protein AGL15 (AGL15) from Brassica napus (Rape).